The following is an 85-amino-acid chain: Small ribosomal subunit protein bS20 (85 aa).

The interval Met1–Ala22 is disordered.

It belongs to the bacterial ribosomal protein bS20 family.

In terms of biological role, binds directly to 16S ribosomal RNA. The sequence is that of Small ribosomal subunit protein bS20 from Bacillus cytotoxicus (strain DSM 22905 / CIP 110041 / 391-98 / NVH 391-98).